We begin with the raw amino-acid sequence, 157 residues long: ATP synthase subunit b' (157 aa).

The chain crosses the membrane as a helical span at residues Ala22–Phe42.

It belongs to the ATPase B chain family. In terms of assembly, F-type ATPases have 2 components, F(1) - the catalytic core - and F(0) - the membrane proton channel. F(1) has five subunits: alpha(3), beta(3), gamma(1), delta(1), epsilon(1). F(0) has four main subunits: a(1), b(1), b'(1) and c(10-14). The alpha and beta chains form an alternating ring which encloses part of the gamma chain. F(1) is attached to F(0) by a central stalk formed by the gamma and epsilon chains, while a peripheral stalk is formed by the delta, b and b' chains.

The protein localises to the cellular thylakoid membrane. In terms of biological role, f(1)F(0) ATP synthase produces ATP from ADP in the presence of a proton or sodium gradient. F-type ATPases consist of two structural domains, F(1) containing the extramembraneous catalytic core and F(0) containing the membrane proton channel, linked together by a central stalk and a peripheral stalk. During catalysis, ATP synthesis in the catalytic domain of F(1) is coupled via a rotary mechanism of the central stalk subunits to proton translocation. Its function is as follows. Component of the F(0) channel, it forms part of the peripheral stalk, linking F(1) to F(0). The b'-subunit is a diverged and duplicated form of b found in plants and photosynthetic bacteria. This Synechococcus sp. (strain JA-2-3B'a(2-13)) (Cyanobacteria bacterium Yellowstone B-Prime) protein is ATP synthase subunit b'.